The primary structure comprises 351 residues: Cytosolic sulfotransferase 9 (351 aa).

The segment covering 1–11 (MDEKDILRNLR) has biased composition (basic and acidic residues). A disordered region spans residues 1 to 24 (MDEKDILRNLREEEEEEEENQSEE). Positions 12–22 (EEEEEEEENQS) are enriched in acidic residues. 80–85 (KSGTTW) contacts 3'-phosphoadenylyl sulfate. The active-site Proton acceptor is the His152. 3'-phosphoadenylyl sulfate-binding positions include Arg174, Ser182, Tyr252, and 317–319 (RKG).

The protein belongs to the sulfotransferase 1 family. As to expression, expressed in roots and leaves.

Its subcellular location is the cytoplasm. In terms of biological role, sulfotransferase that utilizes 3'-phospho-5'-adenylyl sulfate (PAPS) as sulfonate donor. No activity with brassinosteroids. In Arabidopsis thaliana (Mouse-ear cress), this protein is Cytosolic sulfotransferase 9 (STO9).